A 247-amino-acid polypeptide reads, in one-letter code: Probable dihydroorotate dehydrogenase B (NAD(+)), electron transfer subunit (247 aa).

Residues 1-87 (MLRRVMIKET…RGPYGNGFKS (87 aa)) form the FAD-binding FR-type domain. C200, C205, C208, and C216 together coordinate [2Fe-2S] cluster.

The protein belongs to the PyrK family. As to quaternary structure, heterotetramer of 2 PyrK and 2 PyrD type B subunits. Requires [2Fe-2S] cluster as cofactor. The cofactor is FAD.

The protein operates within pyrimidine metabolism; UMP biosynthesis via de novo pathway; orotate from (S)-dihydroorotate (NAD(+) route): step 1/1. In terms of biological role, responsible for channeling the electrons from the oxidation of dihydroorotate from the FMN redox center in the PyrD type B subunit to the ultimate electron acceptor NAD(+). The chain is Probable dihydroorotate dehydrogenase B (NAD(+)), electron transfer subunit from Pyrococcus abyssi (strain GE5 / Orsay).